Here is a 60-residue protein sequence, read N- to C-terminus: Large ribosomal subunit protein bL32 (60 aa).

It belongs to the bacterial ribosomal protein bL32 family.

This is Large ribosomal subunit protein bL32 from Clostridium novyi (strain NT).